A 226-amino-acid polypeptide reads, in one-letter code: Deoxyribose-phosphate aldolase (226 aa).

Residue D84 is the Proton donor/acceptor of the active site. The active-site Schiff-base intermediate with acetaldehyde is K146. The active-site Proton donor/acceptor is the K188.

This sequence belongs to the DeoC/FbaB aldolase family. DeoC type 1 subfamily.

It is found in the cytoplasm. It carries out the reaction 2-deoxy-D-ribose 5-phosphate = D-glyceraldehyde 3-phosphate + acetaldehyde. It participates in carbohydrate degradation; 2-deoxy-D-ribose 1-phosphate degradation; D-glyceraldehyde 3-phosphate and acetaldehyde from 2-deoxy-alpha-D-ribose 1-phosphate: step 2/2. Catalyzes a reversible aldol reaction between acetaldehyde and D-glyceraldehyde 3-phosphate to generate 2-deoxy-D-ribose 5-phosphate. This chain is Deoxyribose-phosphate aldolase, found in Pyrobaculum arsenaticum (strain DSM 13514 / JCM 11321 / PZ6).